The following is a 98-amino-acid chain: Flagellar hook-basal body complex protein FliE (98 aa).

Low complexity predominate over residues 1–23 (MNNINDLRLNNNISNTNKSQNST). The segment at 1–24 (MNNINDLRLNNNISNTNKSQNSTG) is disordered.

Belongs to the FliE family.

The protein localises to the bacterial flagellum basal body. The polypeptide is Flagellar hook-basal body complex protein FliE (Campylobacter jejuni subsp. jejuni serotype O:2 (strain ATCC 700819 / NCTC 11168)).